A 324-amino-acid polypeptide reads, in one-letter code: Brorin (324 aa).

The first 27 residues, 1-27, serve as a signal peptide directing secretion; it reads MPSSSAMAVGALSSSLLVTCCLMVALC. The interval 37 to 126 is disordered; it reads AQAPEQPGQE…TPQGEPPAAA (90 aa). Composition is skewed to basic and acidic residues over residues 44–56 and 64–78; these read GQEKREHASRDSP and RASRDEGSSARDWKS. Positions 92–107 are enriched in low complexity; the sequence is KQKQAWAAQGGSAKAA. A Mediates cell adhesion motif is present at residues 114-116; the sequence is RGD. VWFC domains follow at residues 152–211 and 215–273; these read KGCV…PQCK and NYCE…PICK.

As to quaternary structure, peripherally associated with AMPAR complex. AMPAR complex consists of an inner core made of 4 pore-forming GluA/GRIA proteins (GRIA1, GRIA2, GRIA3 and GRIA4) and 4 major auxiliary subunits arranged in a twofold symmetry. One of the two pairs of distinct binding sites is occupied either by CNIH2, CNIH3 or CACNG2, CACNG3. The other harbors CACNG2, CACNG3, CACNG4, CACNG8 or GSG1L. This inner core of AMPAR complex is complemented by outer core constituents binding directly to the GluA/GRIA proteins at sites distinct from the interaction sites of the inner core constituents. Outer core constituents include at least PRRT1, PRRT2, CKAMP44/SHISA9, FRRS1L and NRN1. The proteins of the inner and outer core serve as a platform for other, more peripherally associated AMPAR constituents, including VWC2. Alone or in combination, these auxiliary subunits control the gating and pharmacology of the AMPAR complex and profoundly impact their biogenesis and protein processing. In terms of tissue distribution, predominantly expressed in the brain (at protein level). It is expressed in the neurons but not the glial cells.

It localises to the secreted. Its subcellular location is the extracellular space. The protein resides in the extracellular matrix. It is found in the basement membrane. The protein localises to the synapse. Functionally, BMP antagonist which may play a role in neural development. Promotes cell adhesion. The polypeptide is Brorin (Vwc2) (Mus musculus (Mouse)).